Here is a 273-residue protein sequence, read N- to C-terminus: 4-hydroxy-tetrahydrodipicolinate reductase (273 aa).

12–17 (GAGGRM) provides a ligand contact to NAD(+). Arginine 39 is a binding site for NADP(+). NAD(+)-binding positions include 102–104 (GTT) and 126–129 (AANF). The active-site Proton donor/acceptor is the histidine 159. Histidine 160 provides a ligand contact to (S)-2,3,4,5-tetrahydrodipicolinate. Lysine 163 serves as the catalytic Proton donor. 169–170 (GT) provides a ligand contact to (S)-2,3,4,5-tetrahydrodipicolinate.

Belongs to the DapB family. Homotetramer.

It is found in the cytoplasm. It catalyses the reaction (S)-2,3,4,5-tetrahydrodipicolinate + NAD(+) + H2O = (2S,4S)-4-hydroxy-2,3,4,5-tetrahydrodipicolinate + NADH + H(+). The catalysed reaction is (S)-2,3,4,5-tetrahydrodipicolinate + NADP(+) + H2O = (2S,4S)-4-hydroxy-2,3,4,5-tetrahydrodipicolinate + NADPH + H(+). The protein operates within amino-acid biosynthesis; L-lysine biosynthesis via DAP pathway; (S)-tetrahydrodipicolinate from L-aspartate: step 4/4. Its function is as follows. Catalyzes the conversion of 4-hydroxy-tetrahydrodipicolinate (HTPA) to tetrahydrodipicolinate. The sequence is that of 4-hydroxy-tetrahydrodipicolinate reductase from Sodalis glossinidius (strain morsitans).